Here is a 23-residue protein sequence, read N- to C-terminus: Conolysin-Mt1 (23 aa).

A Serine amide modification is found at S22.

Expressed by the venom duct.

Its subcellular location is the secreted. Functionally, this cytolytic peptide has ability to disrupt the integrity of cell membranes from both prokaryotes and eukaryotes. It permeabilizes both negatively charged prokaryotic (PE:PG) and zwitterionic eukaryotic (PC:cholesterol) model membranes. It has potent hemolytic activity on human erythrocytes and exhibits low antimicrobial activity against the Gram-negative bacterium E.coli (MIC&gt;50 uM) and the Gram-positive bacterium S.aureus (MIC=25-50 uM). Intracranial injection causes mice to shuffle backward until the encounter an obstacle, at which time the mouse jump into the air. The backward shuffle is reminiscent to the signature dance 'moonwalk' that gained widespread popularity after being performed by Michael Jackson. The chain is Conolysin-Mt1 from Conus mustelinus (Weasel cone).